Reading from the N-terminus, the 150-residue chain is Large ribosomal subunit protein bL9 (150 aa).

This sequence belongs to the bacterial ribosomal protein bL9 family.

Binds to the 23S rRNA. The protein is Large ribosomal subunit protein bL9 of Aromatoleum aromaticum (strain DSM 19018 / LMG 30748 / EbN1) (Azoarcus sp. (strain EbN1)).